Reading from the N-terminus, the 389-residue chain is Phospholipid phosphatase-related protein type 2 (389 aa).

The next 2 helical transmembrane spans lie at 14 to 34 (IIPC…AFFP) and 66 to 86 (FLGV…AGQV). N-linked (GlcNAc...) asparagine glycosylation is present at N102. 3 helical membrane-spanning segments follow: residues 147 to 167 (AALC…VFRV), 176 to 196 (SLCL…VAEY), and 203 to 223 (VLAG…CVVH). Residues S236 and S249 each carry the phosphoserine modification. 2 disordered regions span residues 255-280 (SVAQ…PQNC) and 295-351 (APAM…GRKL). Residues 265 to 278 (SHSTPARLTPSKPQ) show a composition bias toward polar residues. Over residues 314 to 339 (TPLPLPLPLPAPAPSQGPSPSSPGPG) the composition is skewed to pro residues.

This sequence belongs to the PA-phosphatase related phosphoesterase family.

Its subcellular location is the membrane. This chain is Phospholipid phosphatase-related protein type 2, found in Bos taurus (Bovine).